A 220-amino-acid chain; its full sequence is Inner membrane-spanning protein YciB (220 aa).

The next 6 helical transmembrane spans lie at 20–40 (EVPP…FFFA), 57–77 (IGAP…IALA), 86–106 (LPIM…LTLW), 123–143 (LFGG…GYVF), 156–176 (KLTL…EIVW), and 187–207 (FKVW…MPLI).

Belongs to the YciB family.

The protein localises to the cell inner membrane. Its function is as follows. Plays a role in cell envelope biogenesis, maintenance of cell envelope integrity and membrane homeostasis. This is Inner membrane-spanning protein YciB from Brucella melitensis biotype 2 (strain ATCC 23457).